We begin with the raw amino-acid sequence, 218 residues long: Ribose-5-phosphate isomerase A (218 aa).

Substrate is bound by residues 28–31 (TGST), 81–84 (DSAD), and 94–97 (KGGG). Glu-103 serves as the catalytic Proton acceptor. Residue Lys-121 participates in substrate binding.

This sequence belongs to the ribose 5-phosphate isomerase family. As to quaternary structure, homodimer.

The catalysed reaction is aldehydo-D-ribose 5-phosphate = D-ribulose 5-phosphate. Its pathway is carbohydrate degradation; pentose phosphate pathway; D-ribose 5-phosphate from D-ribulose 5-phosphate (non-oxidative stage): step 1/1. Its function is as follows. Catalyzes the reversible conversion of ribose-5-phosphate to ribulose 5-phosphate. This is Ribose-5-phosphate isomerase A from Buchnera aphidicola subsp. Baizongia pistaciae (strain Bp).